Consider the following 161-residue polypeptide: Vitamin K-dependent protein C (161 aa).

A Peptidase S1 domain is found at 1–161; that stretch reads EKWELDLDIE…GCGLLHNYGV (161 aa). Residue Asn-17 is glycosylated (N-linked (GlcNAc...) asparagine). Asp-26 (charge relay system) is an active-site residue. The N-linked (GlcNAc...) asparagine glycan is linked to Asn-82. Cystine bridges form between Cys-100-Cys-114 and Cys-125-Cys-153. The Charge relay system role is filled by Ser-129.

Belongs to the peptidase S1 family. In terms of tissue distribution, plasma; synthesized in the liver.

The protein localises to the secreted. It is found in the golgi apparatus. It localises to the endoplasmic reticulum. It carries out the reaction Degradation of blood coagulation factors Va and VIIIa.. Functionally, protein C is a vitamin K-dependent serine protease that regulates blood coagulation by inactivating factors Va and VIIIa in the presence of calcium ions and phospholipids. Exerts a protective effect on the endothelial cell barrier function. The protein is Vitamin K-dependent protein C (PROC) of Macaca mulatta (Rhesus macaque).